Reading from the N-terminus, the 234-residue chain is Glucosamine-6-phosphate deaminase (234 aa).

Catalysis depends on Asp62, which acts as the Proton acceptor; for enolization step. Catalysis depends on Asn128, which acts as the For ring-opening step. The active-site Proton acceptor; for ring-opening step is His130. The active-site For ring-opening step is the Glu135.

The protein belongs to the glucosamine/galactosamine-6-phosphate isomerase family. NagB subfamily.

It carries out the reaction alpha-D-glucosamine 6-phosphate + H2O = beta-D-fructose 6-phosphate + NH4(+). It participates in amino-sugar metabolism; N-acetylneuraminate degradation; D-fructose 6-phosphate from N-acetylneuraminate: step 5/5. Its function is as follows. Catalyzes the reversible isomerization-deamination of glucosamine 6-phosphate (GlcN6P) to form fructose 6-phosphate (Fru6P) and ammonium ion. The polypeptide is Glucosamine-6-phosphate deaminase (Streptococcus uberis (strain ATCC BAA-854 / 0140J)).